The sequence spans 176 residues: NAD(P)H-quinone oxidoreductase subunit 6, chloroplastic (176 aa).

5 helical membrane-spanning segments follow: residues 10–30 (FLLVFLGLGLILGGLGVVLLT), 32–52 (PIYSAFSLGLVLVCISLFYIL), 61–81 (AQLLIYVGAINVLIIFAVMFM), 95–115 (VGSGVTSLVCTSIFVSLITII), and 152–172 (FFLPFEFISIILLVALIGAIA).

The protein belongs to the complex I subunit 6 family. In terms of assembly, NDH is composed of at least 16 different subunits, 5 of which are encoded in the nucleus.

It is found in the plastid. Its subcellular location is the chloroplast thylakoid membrane. The catalysed reaction is a plastoquinone + NADH + (n+1) H(+)(in) = a plastoquinol + NAD(+) + n H(+)(out). The enzyme catalyses a plastoquinone + NADPH + (n+1) H(+)(in) = a plastoquinol + NADP(+) + n H(+)(out). NDH shuttles electrons from NAD(P)H:plastoquinone, via FMN and iron-sulfur (Fe-S) centers, to quinones in the photosynthetic chain and possibly in a chloroplast respiratory chain. The immediate electron acceptor for the enzyme in this species is believed to be plastoquinone. Couples the redox reaction to proton translocation, and thus conserves the redox energy in a proton gradient. The polypeptide is NAD(P)H-quinone oxidoreductase subunit 6, chloroplastic (ndhG) (Manihot esculenta (Cassava)).